We begin with the raw amino-acid sequence, 1046 residues long: uncharacterized protein (1046 aa).

A compositionally biased stretch (low complexity) spans 594–615; the sequence is LNSIPSDSSSSGSSRKSSPRGS. Residues 594-622 form a disordered region; that stretch reads LNSIPSDSSSSGSSRKSSPRGSPNLGEAP.

This is an uncharacterized protein from Invertebrate iridescent virus 6 (IIV-6).